A 59-amino-acid polypeptide reads, in one-letter code: Large ribosomal subunit protein bL32 (59 aa).

The segment covering methionine 1–arginine 22 has biased composition (basic residues). Residues methionine 1 to glutamate 59 are disordered.

It belongs to the bacterial ribosomal protein bL32 family.

This chain is Large ribosomal subunit protein bL32, found in Acaryochloris marina (strain MBIC 11017).